We begin with the raw amino-acid sequence, 520 residues long: MDKFRRNGKEDTFRQRRFLYPLLFQENLYAIAYDHYLSRSSSFESMENSSYNDRFSFLTVKRLISRIRQQNGSIVSFGNYNQNKNKLVGHNRNFYSELVLEGLTVVLEVTFSIQSKHYLEGMNEWNSFRSIHSIFPFMEDKFPHSNFLLDIRIPHSTHPEILVRTFRYWIQDAPSLHSLRSVLHEHRNLILSENLDQLILIASKEKTRLSLSVLWNYYVYECESLLVPLWKRFSYSRSLSYGAFLERTTFYRKIEHIVIFSHKSIKDLKKRIWFLKDPSIHYVKDRERFLIALRGTYLLVKKWRYHLTNFWQCHFHLRSQPYRMSIDELSKNCFSFLGYLFSVQMKTFVVKIKMLDDSFITDPITKEFDPIAPTTLLIGYLAKERFCDISGRPTGRLAWTGLTDDNILHRFDRIWRNILHYYSGSSKKDGLYRMKYILRLPCAKTLACKHKSAIRVVRERFGSELFTKSSPKERELISLSFSKTRSQRERIWHSDILQRNPFVNSWWNKQNLQVETPFDR.

This sequence belongs to the intron maturase 2 family. MatK subfamily.

The protein localises to the plastid. Its subcellular location is the chloroplast. In terms of biological role, usually encoded in the trnK tRNA gene intron. Probably assists in splicing its own and other chloroplast group II introns. In Cycas taitungensis (Prince sago), this protein is Maturase K.